We begin with the raw amino-acid sequence, 290 residues long: Ribosomal RNA small subunit methyltransferase A (290 aa).

6 residues coordinate S-adenosyl-L-methionine: asparagine 27, leucine 29, glycine 54, glutamate 75, aspartate 100, and asparagine 125.

It belongs to the class I-like SAM-binding methyltransferase superfamily. rRNA adenine N(6)-methyltransferase family. RsmA subfamily.

It localises to the cytoplasm. It catalyses the reaction adenosine(1518)/adenosine(1519) in 16S rRNA + 4 S-adenosyl-L-methionine = N(6)-dimethyladenosine(1518)/N(6)-dimethyladenosine(1519) in 16S rRNA + 4 S-adenosyl-L-homocysteine + 4 H(+). Specifically dimethylates two adjacent adenosines (A1518 and A1519) in the loop of a conserved hairpin near the 3'-end of 16S rRNA in the 30S particle. May play a critical role in biogenesis of 30S subunits. The sequence is that of Ribosomal RNA small subunit methyltransferase A from Streptococcus pneumoniae (strain Hungary19A-6).